The chain runs to 325 residues: Glutarate 2-hydroxylase (325 aa).

The Fe cation site is built by His160, Asp162, and His292.

This sequence belongs to the glutarate hydroxylase family. As to quaternary structure, homotetramer. Fe(2+) is required as a cofactor.

It catalyses the reaction glutarate + 2-oxoglutarate + O2 = (S)-2-hydroxyglutarate + succinate + CO2. The protein operates within amino-acid degradation. Acts as an alpha-ketoglutarate-dependent dioxygenase catalyzing hydroxylation of glutarate (GA) to L-2-hydroxyglutarate (L2HG). Functions in a L-lysine degradation pathway that proceeds via cadaverine, glutarate and L-2-hydroxyglutarate. The protein is Glutarate 2-hydroxylase of Escherichia coli O6:K15:H31 (strain 536 / UPEC).